We begin with the raw amino-acid sequence, 227 residues long: Cytochrome c oxidase subunit 2 (227 aa).

The Mitochondrial intermembrane segment spans residues 1-14; that stretch reads MAYPFQLGLQDATS. The chain crosses the membrane as a helical span at residues 15–45; it reads PIMEELLHFHDHTLMIVFLISSLVLYIITLM. Residues 46 to 59 lie on the Mitochondrial matrix side of the membrane; the sequence is LTTKLTHTSTMDAQ. The helical transmembrane segment at 60 to 87 threads the bilayer; it reads EVETVWTILPAIILVLIALPSLRILYMM. Residues 88–227 are Mitochondrial intermembrane-facing; the sequence is DEINNPSLTV…YFETWSALMV (140 aa). Cu cation-binding residues include His-161, Cys-196, Glu-198, Cys-200, His-204, and Met-207. Position 198 (Glu-198) interacts with Mg(2+). Residue Tyr-218 is modified to Phosphotyrosine.

This sequence belongs to the cytochrome c oxidase subunit 2 family. In terms of assembly, component of the cytochrome c oxidase (complex IV, CIV), a multisubunit enzyme composed of 14 subunits. The complex is composed of a catalytic core of 3 subunits MT-CO1, MT-CO2 and MT-CO3, encoded in the mitochondrial DNA, and 11 supernumerary subunits COX4I, COX5A, COX5B, COX6A, COX6B, COX6C, COX7A, COX7B, COX7C, COX8 and NDUFA4, which are encoded in the nuclear genome. The complex exists as a monomer or a dimer and forms supercomplexes (SCs) in the inner mitochondrial membrane with NADH-ubiquinone oxidoreductase (complex I, CI) and ubiquinol-cytochrome c oxidoreductase (cytochrome b-c1 complex, complex III, CIII), resulting in different assemblies (supercomplex SCI(1)III(2)IV(1) and megacomplex MCI(2)III(2)IV(2)). Found in a complex with TMEM177, COA6, COX18, COX20, SCO1 and SCO2. Interacts with TMEM177 in a COX20-dependent manner. Interacts with COX20. Interacts with COX16. The cofactor is Cu cation.

The protein localises to the mitochondrion inner membrane. It carries out the reaction 4 Fe(II)-[cytochrome c] + O2 + 8 H(+)(in) = 4 Fe(III)-[cytochrome c] + 2 H2O + 4 H(+)(out). Component of the cytochrome c oxidase, the last enzyme in the mitochondrial electron transport chain which drives oxidative phosphorylation. The respiratory chain contains 3 multisubunit complexes succinate dehydrogenase (complex II, CII), ubiquinol-cytochrome c oxidoreductase (cytochrome b-c1 complex, complex III, CIII) and cytochrome c oxidase (complex IV, CIV), that cooperate to transfer electrons derived from NADH and succinate to molecular oxygen, creating an electrochemical gradient over the inner membrane that drives transmembrane transport and the ATP synthase. Cytochrome c oxidase is the component of the respiratory chain that catalyzes the reduction of oxygen to water. Electrons originating from reduced cytochrome c in the intermembrane space (IMS) are transferred via the dinuclear copper A center (CU(A)) of subunit 2 and heme A of subunit 1 to the active site in subunit 1, a binuclear center (BNC) formed by heme A3 and copper B (CU(B)). The BNC reduces molecular oxygen to 2 water molecules using 4 electrons from cytochrome c in the IMS and 4 protons from the mitochondrial matrix. The chain is Cytochrome c oxidase subunit 2 (MT-CO2) from Vulpes zerda (Fennec fox).